We begin with the raw amino-acid sequence, 1621 residues long: Ferredoxin-dependent glutamate synthase, chloroplastic (1621 aa).

The N-terminal 57 residues, 1–57 (MALQSAPKLLYSSPSPSVFSANERRVAFSDFVGLSKKRSRRRRIAGTFRNFPALSAV), are a transit peptide targeting the chloroplast. The Nucleophile role is filled by cysteine 105. One can recognise a Glutamine amidotransferase type-2 domain in the interval 105–504 (CGVGFIANLD…PGMMISVDLS (400 aa)). 1183–1240 (LSETHQTLISNGLRERVILRVDGGLKCGVDVMMAAAMGADEYGFGSLAMIATGCVMAR) lines the FMN pocket. [3Fe-4S] cluster contacts are provided by cysteine 1236, cysteine 1242, and cysteine 1247.

The protein belongs to the glutamate synthase family. Interacts with ferredoxin. Interacts (via FMN-binding domain) with SQD1. The cofactor is [3Fe-4S] cluster. Requires FMN as cofactor. Expressed in young leaves. Not detected in mature leaves.

It is found in the plastid. Its subcellular location is the chloroplast stroma. The enzyme catalyses 2 oxidized [2Fe-2S]-[ferredoxin] + 2 L-glutamate = L-glutamine + 2 reduced [2Fe-2S]-[ferredoxin] + 2-oxoglutarate + 2 H(+). It functions in the pathway amino-acid biosynthesis; L-glutamate biosynthesis via GLT pathway; L-glutamate from 2-oxoglutarate and L-glutamine (ferredoxin route): step 1/1. The protein operates within energy metabolism; nitrogen metabolism. With respect to regulation, inhibited by N-bromosuccinimide, which is specific for modification of tryptophan residues probably involved in the electron transfer from ferredoxin. Functionally, catalyzes the reductive conversion of 2-oxoglutarate plus glutamine to two molecules of glutamate, using reduced ferredoxin as the electron donor. Contains one FMN but no FAD. The FMN-binding domain is also involved in the delivery of sulfite to the reaction center of SQD1. The sequence is that of Ferredoxin-dependent glutamate synthase, chloroplastic from Spinacia oleracea (Spinach).